The primary structure comprises 371 residues: Putrescine N-methyltransferase 2 (371 aa).

Composition is skewed to polar residues over residues 1 to 14 (MEVISTNTNGSTIF) and 23 to 70 (GHQN…HDNG). The interval 1 to 70 (MEVISTNTNG…QNGTISHDNG (70 aa)) is disordered. A PABS domain is found at 82–319 (PGWFSEFSAL…GVIGYMLCST (238 aa)). S-adenosyl-L-methionine is bound by residues Gln-113, Glu-188, and 219–220 (DG). The active-site Proton acceptor is the Asp-238. Position 307 (Tyr-307) interacts with S-adenosyl-L-methionine.

It belongs to the class I-like SAM-binding methyltransferase superfamily. Spermidine/spermine synthase family. In terms of tissue distribution, mainly expressed in roots.

It carries out the reaction putrescine + S-adenosyl-L-methionine = N-methylputrescine + S-adenosyl-L-homocysteine + H(+). It functions in the pathway alkaloid biosynthesis; nicotine biosynthesis. In terms of biological role, involved in the biosynthesis of pyridine alkaloid natural products, leading mainly to the production of anabasine, anatabine, nicotine and nornicotine, effective deterrents against herbivores with antiparasitic and pesticide properties (neurotoxins); nornicotine serves as the precursor in the synthesis of the carcinogen compound N'-nitrosonornicotine (NNN). Methyltransferase that mediates the conversion of putrescine to N-methylputrescine. This is Putrescine N-methyltransferase 2 from Nicotiana attenuata (Coyote tobacco).